The chain runs to 373 residues: Stationary phase protein 5 (373 aa).

Required for survival at high temperature during stationary phase. In Saccharomyces cerevisiae (strain ATCC 204508 / S288c) (Baker's yeast), this protein is Stationary phase protein 5 (SPG5).